A 547-amino-acid chain; its full sequence is Chaperonin GroEL (547 aa).

ATP-binding positions include 30 to 33 (TLGP), Lys-51, 87 to 91 (DGTTT), Gly-415, 479 to 481 (NAA), and Asp-495.

Belongs to the chaperonin (HSP60) family. In terms of assembly, forms a cylinder of 14 subunits composed of two heptameric rings stacked back-to-back. Interacts with the co-chaperonin GroES.

It localises to the cytoplasm. The enzyme catalyses ATP + H2O + a folded polypeptide = ADP + phosphate + an unfolded polypeptide.. Together with its co-chaperonin GroES, plays an essential role in assisting protein folding. The GroEL-GroES system forms a nano-cage that allows encapsulation of the non-native substrate proteins and provides a physical environment optimized to promote and accelerate protein folding. The polypeptide is Chaperonin GroEL (Pseudomonas paraeruginosa (strain DSM 24068 / PA7) (Pseudomonas aeruginosa (strain PA7))).